The following is a 61-amino-acid chain: [Val1,Thr6]-bradykinyl-Gln,Ser (61 aa).

Positions M1–C22 are cleaved as a signal peptide. A propeptide spanning residues E23 to P50 is cleaved from the precursor. Residues E25–S61 form a disordered region. The segment covering E30–S42 has biased composition (acidic residues). Position 52 is a 4-hydroxyproline; in form [Val1,Hyp2,Thr6]-Bradykinyl-Gln,Ser and [Val1,Hyp2,Thr6]-Bradykinin (P52).

This sequence belongs to the frog skin active peptide (FSAP) family. Bradykinin-related peptide subfamily. In terms of tissue distribution, expressed by the skin glands.

It is found in the secreted. Induces contraction of rat ileum smooth muscle (EC(50)=2.73 uM) but has no activity towards smooth muscle from tail artery, urinary bladder or uterus up to concentrations of 100 uM. Binds to both bradykinin receptor B1 (BDKRB1) and B2 (BDKRB2); the effect via BDKRB1 is stronger. Its function is as follows. [Val1,Hyp2,Thr6]-bradykinin-Gln,Ser: Induces contraction of rat ileum smooth muscle (EC(50)=710 nM) but has no activity towards smooth muscle from tail artery, urinary bladder or uterus up to concentrations of 100 uM. Binds to both bradykinin receptor B1 (BDKRB1) and B2 (BDKRB2); the effect via BDKRB1 is stronger. Induces contraction of guinea pig ileum smooth muscle. This Pithecopus hypochondrialis (Orange-legged leaf frog) protein is [Val1,Thr6]-bradykinyl-Gln,Ser.